The sequence spans 457 residues: Oxysterol-binding protein-related protein 3C (457 aa).

Disordered stretches follow at residues 37-61 (NEGV…KGRW) and 363-393 (QGDL…KGQK). 2 stretches are compositionally biased toward basic and acidic residues: residues 47 to 61 (GGKE…KGRW) and 370 to 391 (GSEK…ETKG).

Belongs to the OSBP family. As to expression, expressed in roots, leaves, stems and flowers.

May be involved in the transport of sterols. The protein is Oxysterol-binding protein-related protein 3C (ORP3C) of Arabidopsis thaliana (Mouse-ear cress).